The chain runs to 91 residues: Acylphosphatase (91 aa).

The 86-residue stretch at 6-91 (CMRCYISGRV…WEDYISFDVL (86 aa)) folds into the Acylphosphatase-like domain. Residues Arg-21 and Asn-39 contribute to the active site.

This sequence belongs to the acylphosphatase family.

It catalyses the reaction an acyl phosphate + H2O = a carboxylate + phosphate + H(+). The polypeptide is Acylphosphatase (acyP) (Legionella pneumophila (strain Corby)).